A 193-amino-acid polypeptide reads, in one-letter code: Large ribosomal subunit protein uL5 (193 aa).

The protein belongs to the universal ribosomal protein uL5 family. In terms of assembly, part of the 50S ribosomal subunit; part of the 5S rRNA/L5/L18/L25 subcomplex. Contacts the 5S rRNA and the P site tRNA. Forms a bridge to the 30S subunit in the 70S ribosome.

This is one of the proteins that bind and probably mediate the attachment of the 5S RNA into the large ribosomal subunit, where it forms part of the central protuberance. In the 70S ribosome it contacts protein S13 of the 30S subunit (bridge B1b), connecting the 2 subunits; this bridge is implicated in subunit movement. Contacts the P site tRNA; the 5S rRNA and some of its associated proteins might help stabilize positioning of ribosome-bound tRNAs. The chain is Large ribosomal subunit protein uL5 from Renibacterium salmoninarum (strain ATCC 33209 / DSM 20767 / JCM 11484 / NBRC 15589 / NCIMB 2235).